The following is a 176-amino-acid chain: ATP-dependent protease subunit HslV (176 aa).

Threonine 2 is a catalytic residue. 3 residues coordinate Na(+): alanine 157, cysteine 160, and threonine 163.

It belongs to the peptidase T1B family. HslV subfamily. In terms of assembly, a double ring-shaped homohexamer of HslV is capped on each side by a ring-shaped HslU homohexamer. The assembly of the HslU/HslV complex is dependent on binding of ATP.

The protein resides in the cytoplasm. It carries out the reaction ATP-dependent cleavage of peptide bonds with broad specificity.. With respect to regulation, allosterically activated by HslU binding. Functionally, protease subunit of a proteasome-like degradation complex believed to be a general protein degrading machinery. The polypeptide is ATP-dependent protease subunit HslV (Buchnera aphidicola subsp. Acyrthosiphon pisum (strain APS) (Acyrthosiphon pisum symbiotic bacterium)).